Here is a 164-residue protein sequence, read N- to C-terminus: F-box protein At4g05010 (164 aa).

The interval 38-57 is disordered; the sequence is SKRAPENDSPPVKRPSHETT. The 49-residue stretch at 61–109 folds into the F-box domain; the sequence is RSLLETLHQDILIRVLCHVDHEDLATLKRVSKTIRKAVIEAKKSHFDYS.

This chain is F-box protein At4g05010, found in Arabidopsis thaliana (Mouse-ear cress).